The chain runs to 684 residues: Sec1 family domain-containing protein 2 (684 aa).

It belongs to the STXBP/unc-18/SEC1 family.

In terms of biological role, may be involved in protein transport. The sequence is that of Sec1 family domain-containing protein 2 (SCFD2) from Homo sapiens (Human).